A 445-amino-acid polypeptide reads, in one-letter code: Glucose-6-phosphate isomerase (445 aa).

Glu-287 serves as the catalytic Proton donor. Active-site residues include His-308 and Lys-422.

Belongs to the GPI family.

It is found in the cytoplasm. The enzyme catalyses alpha-D-glucose 6-phosphate = beta-D-fructose 6-phosphate. It functions in the pathway carbohydrate biosynthesis; gluconeogenesis. The protein operates within carbohydrate degradation; glycolysis; D-glyceraldehyde 3-phosphate and glycerone phosphate from D-glucose: step 2/4. Its function is as follows. Catalyzes the reversible isomerization of glucose-6-phosphate to fructose-6-phosphate. The chain is Glucose-6-phosphate isomerase from Bacteroides fragilis (strain ATCC 25285 / DSM 2151 / CCUG 4856 / JCM 11019 / LMG 10263 / NCTC 9343 / Onslow / VPI 2553 / EN-2).